A 196-amino-acid polypeptide reads, in one-letter code: Rac-like GTP-binding protein ARAC5 (196 aa).

Residue 16–21 (AVGKTC) coordinates GTP. An Effector region motif is present at residues 35–43 (YVPTVFDNF). GTP is bound by residues 119-121 (KLD) and 159-161 (SSK). Cysteine methyl ester is present on Cys193. Cys193 carries S-geranylgeranyl cysteine lipidation. A propeptide spans 194–196 (VFL) (removed in mature form).

It belongs to the small GTPase superfamily. Rho family. As to quaternary structure, interacts with GDI1 and ROPGEF8 homodimer. Binds to SPK1. In terms of tissue distribution, ubiquitous. Preferentially expressed at the tip of root hairs.

It localises to the cytoplasm. Its subcellular location is the membrane. The protein resides in the cell membrane. Functionally, involved in cell polarity control during the actin-dependent tip growth of root hairs, thus regulating root hair length and root hair initiation. In terms of biological role, inactive GDP-bound Rho GTPases reside in the cytosol, are found in a complex with Rho GDP-dissociation inhibitors (Rho GDIs), and are released from the GDI protein in order to translocate to membranes upon activation. The polypeptide is Rac-like GTP-binding protein ARAC5 (Arabidopsis thaliana (Mouse-ear cress)).